We begin with the raw amino-acid sequence, 31 residues long: uncharacterized protein (31 aa).

This is an uncharacterized protein from Saccharomyces cerevisiae (strain ATCC 204508 / S288c) (Baker's yeast).